The sequence spans 288 residues: Eukaryotic translation initiation factor 3 subunit G (288 aa).

Disordered stretches follow at residues 1 to 33 (MSKLGNRADWADDEEFDDPSALPPQQITTNKDG) and 156 to 197 (DEPT…GGER). The region spanning 208–286 (ATLRVTNVSE…LILRVEFAKR (79 aa)) is the RRM domain.

This sequence belongs to the eIF-3 subunit G family. In terms of assembly, component of the eukaryotic translation initiation factor 3 (eIF-3) complex.

It is found in the cytoplasm. RNA-binding component of the eukaryotic translation initiation factor 3 (eIF-3) complex, which is involved in protein synthesis of a specialized repertoire of mRNAs and, together with other initiation factors, stimulates binding of mRNA and methionyl-tRNAi to the 40S ribosome. The eIF-3 complex specifically targets and initiates translation of a subset of mRNAs involved in cell proliferation. This subunit can bind 18S rRNA. This is Eukaryotic translation initiation factor 3 subunit G (tif35) from Aspergillus niger (strain ATCC MYA-4892 / CBS 513.88 / FGSC A1513).